A 332-amino-acid polypeptide reads, in one-letter code: tRNA uridine(34) hydroxylase (332 aa).

Positions 123 to 217 constitute a Rhodanese domain; it reads SDPEVLLVDT…YLEEVKQEES (95 aa). The active-site Cysteine persulfide intermediate is cysteine 177. A disordered region spans residues 302 to 332; it reads SDVGAVIQSRRDNKENLKKSQVKLNNKKYNK. Basic and acidic residues predominate over residues 310-319; the sequence is SRRDNKENLK.

It belongs to the TrhO family.

It carries out the reaction uridine(34) in tRNA + AH2 + O2 = 5-hydroxyuridine(34) in tRNA + A + H2O. In terms of biological role, catalyzes oxygen-dependent 5-hydroxyuridine (ho5U) modification at position 34 in tRNAs. The protein is tRNA uridine(34) hydroxylase of Shewanella woodyi (strain ATCC 51908 / MS32).